Reading from the N-terminus, the 186-residue chain is A-type ATP synthase subunit E (186 aa).

It belongs to the V-ATPase E subunit family. As to quaternary structure, has multiple subunits with at least A(3), B(3), C, D, E, F, H, I and proteolipid K(x).

It localises to the cell membrane. Component of the A-type ATP synthase that produces ATP from ADP in the presence of a proton gradient across the membrane. This is A-type ATP synthase subunit E from Methanocella arvoryzae (strain DSM 22066 / NBRC 105507 / MRE50).